The chain runs to 226 residues: Ribonuclease 3 (226 aa).

One can recognise an RNase III domain in the interval 6-128; the sequence is IQKLQKILGY…LIGSIFLDSN (123 aa). Glutamate 41 provides a ligand contact to Mg(2+). Residue aspartate 45 is part of the active site. Residues asparagine 114 and glutamate 117 each contribute to the Mg(2+) site. Glutamate 117 is an active-site residue. One can recognise a DRBM domain in the interval 155 to 225; it reads DPKTRLQEYL…AQNALIKLGI (71 aa).

The protein belongs to the ribonuclease III family. As to quaternary structure, homodimer. Mg(2+) is required as a cofactor.

Its subcellular location is the cytoplasm. It catalyses the reaction Endonucleolytic cleavage to 5'-phosphomonoester.. Its function is as follows. Digests double-stranded RNA. Involved in the processing of primary rRNA transcript to yield the immediate precursors to the large and small rRNAs (23S and 16S). Processes some mRNAs, and tRNAs when they are encoded in the rRNA operon. Processes pre-crRNA and tracrRNA of type II CRISPR loci if present in the organism. The polypeptide is Ribonuclease 3 (Buchnera aphidicola subsp. Baizongia pistaciae (strain Bp)).